The chain runs to 278 residues: Putative transposase for insertion sequence element IS986/IS6110 (278 aa).

Residues 101–268 form the Integrase catalytic domain; that stretch reads GPPAPNRLWV…VPPVELEAAY (168 aa).

Involved in the transposition of the insertion sequence. The polypeptide is Putative transposase for insertion sequence element IS986/IS6110 (Mycobacterium tuberculosis (strain CDC 1551 / Oshkosh)).